Consider the following 761-residue polypeptide: Phosphoribosylformylglycinamidine synthase subunit PurL (761 aa).

The active site involves histidine 49. Residues tyrosine 52 and lysine 92 each contribute to the ATP site. Glutamate 94 contacts Mg(2+). Substrate is bound by residues 95 to 98 and arginine 117; that span reads SHNH. The active-site Proton acceptor is histidine 96. Position 118 (aspartate 118) interacts with Mg(2+). Glutamine 241 contributes to the substrate binding site. Residue aspartate 269 coordinates Mg(2+). 318–320 is a binding site for substrate; the sequence is ESQ. 2 residues coordinate ATP: asparagine 502 and glycine 539. Asparagine 540 serves as a coordination point for Mg(2+). Residue serine 542 coordinates substrate.

Belongs to the FGAMS family. Monomer. Part of the FGAM synthase complex composed of 1 PurL, 1 PurQ and 2 PurS subunits.

The protein resides in the cytoplasm. It carries out the reaction N(2)-formyl-N(1)-(5-phospho-beta-D-ribosyl)glycinamide + L-glutamine + ATP + H2O = 2-formamido-N(1)-(5-O-phospho-beta-D-ribosyl)acetamidine + L-glutamate + ADP + phosphate + H(+). It functions in the pathway purine metabolism; IMP biosynthesis via de novo pathway; 5-amino-1-(5-phospho-D-ribosyl)imidazole from N(2)-formyl-N(1)-(5-phospho-D-ribosyl)glycinamide: step 1/2. Functionally, part of the phosphoribosylformylglycinamidine synthase complex involved in the purines biosynthetic pathway. Catalyzes the ATP-dependent conversion of formylglycinamide ribonucleotide (FGAR) and glutamine to yield formylglycinamidine ribonucleotide (FGAM) and glutamate. The FGAM synthase complex is composed of three subunits. PurQ produces an ammonia molecule by converting glutamine to glutamate. PurL transfers the ammonia molecule to FGAR to form FGAM in an ATP-dependent manner. PurS interacts with PurQ and PurL and is thought to assist in the transfer of the ammonia molecule from PurQ to PurL. This chain is Phosphoribosylformylglycinamidine synthase subunit PurL, found in Chlorobium chlorochromatii (strain CaD3).